The chain runs to 152 residues: Large ribosomal subunit protein uL13 (152 aa).

Belongs to the universal ribosomal protein uL13 family. As to quaternary structure, part of the 50S ribosomal subunit.

Its function is as follows. This protein is one of the early assembly proteins of the 50S ribosomal subunit, although it is not seen to bind rRNA by itself. It is important during the early stages of 50S assembly. The polypeptide is Large ribosomal subunit protein uL13 (Wolbachia pipientis wMel).